Reading from the N-terminus, the 155-residue chain is Putative pre-16S rRNA nuclease (155 aa).

Belongs to the YqgF nuclease family.

It is found in the cytoplasm. In terms of biological role, could be a nuclease involved in processing of the 5'-end of pre-16S rRNA. The chain is Putative pre-16S rRNA nuclease from Xylella fastidiosa (strain M23).